Consider the following 359-residue polypeptide: Mandelate racemase (359 aa).

The Proton acceptor; specific for S-mandelate role is filled by lysine 166. Residues aspartate 195, glutamate 221, and glutamate 247 each contribute to the Mg(2+) site. Histidine 297 acts as the Proton acceptor; specific for R-mandelate in catalysis. Glutamate 317 contacts substrate.

The protein belongs to the mandelate racemase/muconate lactonizing enzyme family. As to quaternary structure, homooctamer. Mg(2+) is required as a cofactor.

It catalyses the reaction (S)-mandelate = (R)-mandelate. It participates in aromatic compound metabolism; (R)-mandelate degradation; benzoate from (R)-mandelate: step 1/4. The chain is Mandelate racemase (mdlA) from Pseudomonas putida (Arthrobacter siderocapsulatus).